We begin with the raw amino-acid sequence, 748 residues long: Acetyl-CoA decarbonylase/synthase complex subunit beta 1 (748 aa).

The [Ni-Fe-S] cluster site is built by Cys480, Cys483, Cys569, and Cys571.

Belongs to the CdhC family. As to quaternary structure, monomer. The ACDS complex is made up of alpha, epsilon, beta, gamma and delta chains with a probable stoichiometry of (alpha(2)epsilon(2))(4)-beta(8)-(gamma(1)delta(1))(8) (Potential). Requires [Ni-Fe-S] cluster as cofactor.

It carries out the reaction Co(I)-[corrinoid Fe-S protein] + acetyl-CoA + H(+) = methyl-Co(III)-[corrinoid Fe-S protein] + CO + CoA. In terms of biological role, part of a complex that catalyzes the reversible cleavage of acetyl-CoA, allowing autotrophic growth from CO(2). The alpha-epsilon complex generates CO from CO(2), while the beta subunit (this protein) combines the CO with CoA and a methyl group to form acetyl-CoA. The methyl group, which is incorporated into acetyl-CoA, is transferred to the beta subunit by a corrinoid iron-sulfur protein (the gamma-delta complex). The protein is Acetyl-CoA decarbonylase/synthase complex subunit beta 1 (cdhC1) of Methanocaldococcus jannaschii (strain ATCC 43067 / DSM 2661 / JAL-1 / JCM 10045 / NBRC 100440) (Methanococcus jannaschii).